The chain runs to 561 residues: uncharacterized protein (561 aa).

Disordered regions lie at residues Ile-20–Pro-42 and Gln-82–Phe-283. The span at Asp-103–Pro-131 shows a compositional bias: basic and acidic residues. Composition is skewed to basic residues over residues Arg-135–Lys-156 and Lys-165–Arg-185. Basic and acidic residues-rich tracts occupy residues Ser-192 to Arg-203, Tyr-211 to Pro-247, and Pro-259 to Ser-272.

It belongs to the mimivirus L41 family.

This is an uncharacterized protein from Acanthamoeba polyphaga (Amoeba).